The chain runs to 346 residues: Methylthioribose-1-phosphate isomerase (346 aa).

Substrate is bound by residues 46–48, arginine 89, and glutamine 196; that span reads RGA. Aspartate 237 acts as the Proton donor in catalysis. 247–248 lines the substrate pocket; the sequence is NK.

It belongs to the eIF-2B alpha/beta/delta subunits family. MtnA subfamily.

The catalysed reaction is 5-(methylsulfanyl)-alpha-D-ribose 1-phosphate = 5-(methylsulfanyl)-D-ribulose 1-phosphate. It participates in amino-acid biosynthesis; L-methionine biosynthesis via salvage pathway; L-methionine from S-methyl-5-thio-alpha-D-ribose 1-phosphate: step 1/6. Its function is as follows. Catalyzes the interconversion of methylthioribose-1-phosphate (MTR-1-P) into methylthioribulose-1-phosphate (MTRu-1-P). The sequence is that of Methylthioribose-1-phosphate isomerase from Geobacter sulfurreducens (strain ATCC 51573 / DSM 12127 / PCA).